Reading from the N-terminus, the 604-residue chain is Aspartate--tRNA(Asp/Asn) ligase (604 aa).

Position 187 (Glu187) interacts with L-aspartate. The segment at 211–214 is aspartate; it reads QQFK. Arg233 and His461 together coordinate L-aspartate. 233–235 lines the ATP pocket; the sequence is RDE. Residue Glu495 participates in ATP binding. Arg502 is an L-aspartate binding site. ATP is bound at residue 547–550; the sequence is GLDR.

This sequence belongs to the class-II aminoacyl-tRNA synthetase family. Type 1 subfamily. Homodimer.

Its subcellular location is the cytoplasm. The enzyme catalyses tRNA(Asx) + L-aspartate + ATP = L-aspartyl-tRNA(Asx) + AMP + diphosphate. Its function is as follows. Aspartyl-tRNA synthetase with relaxed tRNA specificity since it is able to aspartylate not only its cognate tRNA(Asp) but also tRNA(Asn). Reaction proceeds in two steps: L-aspartate is first activated by ATP to form Asp-AMP and then transferred to the acceptor end of tRNA(Asp/Asn). In Chlorobium luteolum (strain DSM 273 / BCRC 81028 / 2530) (Pelodictyon luteolum), this protein is Aspartate--tRNA(Asp/Asn) ligase.